Consider the following 476-residue polypeptide: MSDTPKPPSNTLSLKRETATEAPKLEERLHKVLAQAGLGSRRALEQRISNGLIKVNGDIAQLGMSVKSGDKIELDGRSFVASALTEPARVLIYNKPEGEVTTREDPEGRPTVFETLPVLKGARWIAIGRLDINTTGLLLLTTDGELANAMMHPSSEIEREYVVRVRSPEGEEHVQDELLEQLTRGVMLEDGTAKFDTIERIGNTDSHDWFRVVVKEGRNREVRRLWESQGCQVSRLKRTRYGSVLLPRELLRGQSTELPKTQVEALRTQLKLEKDMPLALTLQPVIGQRRSAKATLHVNRNDNNKHAYHNNHSTADESRELRRFDTLRDDRGRGQGKHHFKDRLTVSGEAAAKQAHKPFKQYKPKNDRSLSEGSPATFQSWYVPEGVSTGPRNHRNAGAGNGAHPNKKSPNPNTRNTQGQQTRKSPYKYTNNAPNFPSDHATPTFNPYGNPGQKTGAGQPNNSGGKYNRNRGPRYP.

The 70-residue stretch at 27–96 (ERLHKVLAQA…PARVLIYNKP (70 aa)) folds into the S4 RNA-binding domain. Residue Asp-131 is the Nucleophile of the active site. The interval 299–476 (NRNDNNKHAY…YNRNRGPRYP (178 aa)) is disordered. Positions 314 to 333 (TADESRELRRFDTLRDDRGR) are enriched in basic and acidic residues. Positions 354 to 363 (QAHKPFKQYK) are enriched in basic residues. Composition is skewed to polar residues over residues 371–380 (SEGSPATFQS) and 408–465 (KSPN…NSGG).

It belongs to the pseudouridine synthase RsuA family.

The catalysed reaction is uridine(2605) in 23S rRNA = pseudouridine(2605) in 23S rRNA. In terms of biological role, responsible for synthesis of pseudouridine from uracil-2605 in 23S ribosomal RNA. This is Ribosomal large subunit pseudouridine synthase B (rluB) from Xylella fastidiosa (strain Temecula1 / ATCC 700964).